We begin with the raw amino-acid sequence, 174 residues long: Large ribosomal subunit protein uL10 (174 aa).

The protein belongs to the universal ribosomal protein uL10 family. As to quaternary structure, part of the ribosomal stalk of the 50S ribosomal subunit. The N-terminus interacts with L11 and the large rRNA to form the base of the stalk. The C-terminus forms an elongated spine to which L12 dimers bind in a sequential fashion forming a multimeric L10(L12)X complex.

Its function is as follows. Forms part of the ribosomal stalk, playing a central role in the interaction of the ribosome with GTP-bound translation factors. In Vesicomyosocius okutanii subsp. Calyptogena okutanii (strain HA), this protein is Large ribosomal subunit protein uL10.